The primary structure comprises 304 residues: Lipoyl synthase (304 aa).

Positions 1-21 are disordered; it reads MAPELIQIDLEPRKPAPKPSW. 7 residues coordinate [4Fe-4S] cluster: Cys48, Cys53, Cys59, Cys74, Cys78, Cys81, and Ser287. The Radical SAM core domain maps to 60 to 276; that stretch reads WNHKTATFML…KEEAMKMGFR (217 aa).

The protein belongs to the radical SAM superfamily. Lipoyl synthase family. It depends on [4Fe-4S] cluster as a cofactor.

It is found in the cytoplasm. It catalyses the reaction [[Fe-S] cluster scaffold protein carrying a second [4Fe-4S](2+) cluster] + N(6)-octanoyl-L-lysyl-[protein] + 2 oxidized [2Fe-2S]-[ferredoxin] + 2 S-adenosyl-L-methionine + 4 H(+) = [[Fe-S] cluster scaffold protein] + N(6)-[(R)-dihydrolipoyl]-L-lysyl-[protein] + 4 Fe(3+) + 2 hydrogen sulfide + 2 5'-deoxyadenosine + 2 L-methionine + 2 reduced [2Fe-2S]-[ferredoxin]. It functions in the pathway protein modification; protein lipoylation via endogenous pathway; protein N(6)-(lipoyl)lysine from octanoyl-[acyl-carrier-protein]: step 2/2. Catalyzes the radical-mediated insertion of two sulfur atoms into the C-6 and C-8 positions of the octanoyl moiety bound to the lipoyl domains of lipoate-dependent enzymes, thereby converting the octanoylated domains into lipoylated derivatives. The protein is Lipoyl synthase of Koribacter versatilis (strain Ellin345).